A 469-amino-acid chain; its full sequence is Serine hydroxymethyltransferase, cytosolic (469 aa).

Residue Thr20 is modified to Phosphothreonine. Ser26 is modified (phosphoserine). Lys248 carries the N6-(pyridoxal phosphate)lysine modification. Ser429 is modified (phosphoserine). Residue Lys456 forms a Glycyl lysine isopeptide (Lys-Gly) (interchain with G-Cter in ubiquitin) linkage.

Belongs to the SHMT family. In terms of assembly, homotetramer. Pyridoxal 5'-phosphate serves as cofactor.

It localises to the cytoplasm. It catalyses the reaction (6R)-5,10-methylene-5,6,7,8-tetrahydrofolate + glycine + H2O = (6S)-5,6,7,8-tetrahydrofolate + L-serine. It participates in one-carbon metabolism; tetrahydrofolate interconversion. Functionally, interconversion of serine and glycine. This is Serine hydroxymethyltransferase, cytosolic from Saccharomyces cerevisiae (strain ATCC 204508 / S288c) (Baker's yeast).